The following is a 165-amino-acid chain: Regulatory protein RecX (165 aa).

The protein belongs to the RecX family.

It localises to the cytoplasm. Its function is as follows. Modulates RecA activity. In Cronobacter sakazakii (strain ATCC BAA-894) (Enterobacter sakazakii), this protein is Regulatory protein RecX.